A 227-amino-acid chain; its full sequence is 7-cyano-7-deazaguanine synthase (227 aa).

9-19 (LSGGLDSATVL) contacts ATP. Residues cysteine 189, cysteine 199, cysteine 202, and cysteine 205 each coordinate Zn(2+).

This sequence belongs to the QueC family. Zn(2+) is required as a cofactor.

It carries out the reaction 7-carboxy-7-deazaguanine + NH4(+) + ATP = 7-cyano-7-deazaguanine + ADP + phosphate + H2O + H(+). It participates in purine metabolism; 7-cyano-7-deazaguanine biosynthesis. Functionally, catalyzes the ATP-dependent conversion of 7-carboxy-7-deazaguanine (CDG) to 7-cyano-7-deazaguanine (preQ(0)). The protein is 7-cyano-7-deazaguanine synthase of Cupriavidus metallidurans (strain ATCC 43123 / DSM 2839 / NBRC 102507 / CH34) (Ralstonia metallidurans).